The following is an 888-amino-acid chain: Dilute domain-containing protein YPR089W (888 aa).

Residues 360–745 (DIVLQSYWLS…KKFLNNKIKD (386 aa)) enclose the Dilute domain. Disordered stretches follow at residues 462 to 504 (KEQQ…NNSS), 805 to 827 (KQRQ…TGDE), and 865 to 888 (LNIP…QNPW). Polar residues-rich tracts occupy residues 809 to 823 (NEPQ…TSDF) and 867 to 880 (IPSS…WSNN).

The protein resides in the golgi apparatus. This is Dilute domain-containing protein YPR089W from Saccharomyces cerevisiae (strain ATCC 204508 / S288c) (Baker's yeast).